The primary structure comprises 861 residues: Transcription factor opdJ (861 aa).

Positions C11–C37 form a DNA-binding region, zn(2)-C6 fungal-type.

The protein resides in the nucleus. Functionally, transcription factor that positively regulates the gene cluster that mediates the biosynthesis of oxopyrrolidines, polyketide-amino acid hybrid compounds with feature structures of tetramic acid. This is Transcription factor opdJ from Penicillium oxalicum (strain 114-2 / CGMCC 5302) (Penicillium decumbens).